The primary structure comprises 161 residues: Zinc finger A20 and AN1 domain-containing stress-associated protein 4 (161 aa).

An A20-type zinc finger spans residues 10 to 44 (PEGHRLCVNNCGFFGSSATMNLCSNCYGDLCLKQQ). The Zn(2+) site is built by Cys16, Cys20, Cys32, and Cys35. Positions 76 to 85 (TTKKTEEKKP) are enriched in basic and acidic residues. Positions 76 to 99 (TTKKTEEKKPIQIPTEQPSPPQRP) are disordered. The AN1-type zinc-finger motif lies at 96–142 (PQRPNRCTVCRKRVGLTGFMCRCGTTFCGSHRYPEVHGCTFDFKSAG). Positions 102, 105, 116, 118, 123, 126, 132, and 134 each coordinate Zn(2+).

Functionally, may be involved in environmental stress response. This Arabidopsis thaliana (Mouse-ear cress) protein is Zinc finger A20 and AN1 domain-containing stress-associated protein 4 (SAP4).